The following is a 230-amino-acid chain: Small ribosomal subunit protein uS2 (230 aa).

This sequence belongs to the universal ribosomal protein uS2 family.

This chain is Small ribosomal subunit protein uS2, found in Prochlorococcus marinus (strain NATL2A).